Consider the following 216-residue polypeptide: Probable transaldolase (216 aa).

Lysine 83 serves as the catalytic Schiff-base intermediate with substrate.

This sequence belongs to the transaldolase family. Type 3B subfamily.

The protein resides in the cytoplasm. The catalysed reaction is D-sedoheptulose 7-phosphate + D-glyceraldehyde 3-phosphate = D-erythrose 4-phosphate + beta-D-fructose 6-phosphate. It participates in carbohydrate degradation; pentose phosphate pathway; D-glyceraldehyde 3-phosphate and beta-D-fructose 6-phosphate from D-ribose 5-phosphate and D-xylulose 5-phosphate (non-oxidative stage): step 2/3. Transaldolase is important for the balance of metabolites in the pentose-phosphate pathway. The protein is Probable transaldolase of Sorangium cellulosum (strain So ce56) (Polyangium cellulosum (strain So ce56)).